Consider the following 94-residue polypeptide: Small ribosomal subunit protein uS19 (94 aa).

Belongs to the universal ribosomal protein uS19 family.

Its function is as follows. Protein S19 forms a complex with S13 that binds strongly to the 16S ribosomal RNA. The protein is Small ribosomal subunit protein uS19 of Anaplasma phagocytophilum (strain HZ).